Reading from the N-terminus, the 98-residue chain is DNA-binding protein Fis (98 aa).

Positions 74–93 form a DNA-binding region, H-T-H motif; the sequence is QTRAALMMGINRGTLRKKLK.

The protein belongs to the transcriptional regulatory Fis family. In terms of assembly, homodimer.

Functionally, activates ribosomal RNA transcription. Plays a direct role in upstream activation of rRNA promoters. In Pectobacterium atrosepticum (strain SCRI 1043 / ATCC BAA-672) (Erwinia carotovora subsp. atroseptica), this protein is DNA-binding protein Fis.